Consider the following 340-residue polypeptide: Ferrochelatase (340 aa).

2 residues coordinate Fe cation: His-189 and Glu-292.

Belongs to the ferrochelatase family.

The protein resides in the cytoplasm. It catalyses the reaction heme b + 2 H(+) = protoporphyrin IX + Fe(2+). It participates in porphyrin-containing compound metabolism; protoheme biosynthesis; protoheme from protoporphyrin-IX: step 1/1. In terms of biological role, catalyzes the ferrous insertion into protoporphyrin IX. The sequence is that of Ferrochelatase from Pseudomonas syringae pv. tomato (strain ATCC BAA-871 / DC3000).